We begin with the raw amino-acid sequence, 282 residues long: Bifunctional protein FolD (282 aa).

Residues 164–166 and serine 189 each bind NADP(+); that span reads GRS.

The protein belongs to the tetrahydrofolate dehydrogenase/cyclohydrolase family. In terms of assembly, homodimer.

It carries out the reaction (6R)-5,10-methylene-5,6,7,8-tetrahydrofolate + NADP(+) = (6R)-5,10-methenyltetrahydrofolate + NADPH. The catalysed reaction is (6R)-5,10-methenyltetrahydrofolate + H2O = (6R)-10-formyltetrahydrofolate + H(+). The protein operates within one-carbon metabolism; tetrahydrofolate interconversion. In terms of biological role, catalyzes the oxidation of 5,10-methylenetetrahydrofolate to 5,10-methenyltetrahydrofolate and then the hydrolysis of 5,10-methenyltetrahydrofolate to 10-formyltetrahydrofolate. The protein is Bifunctional protein FolD of Streptococcus suis (strain 98HAH33).